A 426-amino-acid chain; its full sequence is Probable alpha-galactosidase B (426 aa).

The N-terminal stretch at 1–13 (MSRSKTRQGKLPA) is a signal peptide. 2 disulfides stabilise this stretch: Cys-24–Cys-56 and Cys-106–Cys-136. Asp-134 (nucleophile) is an active-site residue. N-linked (GlcNAc...) asparagine glycosylation is found at Asn-141 and Asn-159. 204-208 (EWGQA) contacts substrate. The N-linked (GlcNAc...) asparagine glycan is linked to Asn-215. Catalysis depends on Asp-226, which acts as the Proton donor. An N-linked (GlcNAc...) asparagine glycan is attached at Asn-265.

The protein belongs to the glycosyl hydrolase 27 family.

The protein resides in the secreted. The catalysed reaction is Hydrolysis of terminal, non-reducing alpha-D-galactose residues in alpha-D-galactosides, including galactose oligosaccharides, galactomannans and galactolipids.. Functionally, hydrolyzes a variety of simple alpha-D-galactoside as well as more complex molecules such as oligosaccharides and polysaccharides. This chain is Probable alpha-galactosidase B (aglB), found in Aspergillus fumigatus (strain CBS 144.89 / FGSC A1163 / CEA10) (Neosartorya fumigata).